Reading from the N-terminus, the 430-residue chain is UDP-glucose 6-dehydrogenase AglM (430 aa).

Cys269 is an active-site residue.

This sequence belongs to the UDP-glucose/GDP-mannose dehydrogenase family.

It catalyses the reaction UDP-alpha-D-glucose + 2 NAD(+) + H2O = UDP-alpha-D-glucuronate + 2 NADH + 3 H(+). It participates in nucleotide-sugar biosynthesis; UDP-alpha-D-glucuronate biosynthesis; UDP-alpha-D-glucuronate from UDP-alpha-D-glucose: step 1/1. It functions in the pathway cell surface structure biogenesis; S-layer biogenesis. With respect to regulation, activity improves as salinity decreases. In terms of biological role, involved in the assembly of a N-linked pentasaccharide that decorates the S-layer glycoprotein and flagellins. Involved in the biosynthesis of the hexuronic acids found at both positions 2 and 3 of the pentasaccharide. In Haloferax volcanii (strain ATCC 29605 / DSM 3757 / JCM 8879 / NBRC 14742 / NCIMB 2012 / VKM B-1768 / DS2) (Halobacterium volcanii), this protein is UDP-glucose 6-dehydrogenase AglM (aglM).